An 89-amino-acid polypeptide reads, in one-letter code: Small ribosomal subunit protein uS15 (89 aa).

Belongs to the universal ribosomal protein uS15 family. Part of the 30S ribosomal subunit. Forms a bridge to the 50S subunit in the 70S ribosome, contacting the 23S rRNA.

Its function is as follows. One of the primary rRNA binding proteins, it binds directly to 16S rRNA where it helps nucleate assembly of the platform of the 30S subunit by binding and bridging several RNA helices of the 16S rRNA. In terms of biological role, forms an intersubunit bridge (bridge B4) with the 23S rRNA of the 50S subunit in the ribosome. The sequence is that of Small ribosomal subunit protein uS15 from Cupriavidus pinatubonensis (strain JMP 134 / LMG 1197) (Cupriavidus necator (strain JMP 134)).